Here is a 112-residue protein sequence, read N- to C-terminus: Nitrogen regulatory protein P-II (112 aa).

The residue at position 51 (Tyr-51) is an O-UMP-tyrosine.

The protein belongs to the P(II) protein family. In terms of assembly, homotrimer.

In terms of biological role, in nitrogen-limiting conditions, when the ratio of Gln to 2-ketoglutarate decreases, P-II is uridylylated to P-II-UMP. P-II-UMP allows the deadenylation of glutamine synthetase (GS), thus activating the enzyme. Conversely, in nitrogen excess P-II is deuridylated and promotes the adenylation of GS. P-II indirectly controls the transcription of the GS gene (glnA). P-II prevents NR-II-catalyzed conversion of NR-I to NR-I-phosphate, the transcriptional activator of glnA. When P-II is uridylylated to P-II-UMP, these events are reversed. In Mycobacterium bovis (strain ATCC BAA-935 / AF2122/97), this protein is Nitrogen regulatory protein P-II (glnB).